A 527-amino-acid polypeptide reads, in one-letter code: Tubulin-specific chaperone E (527 aa).

Serine 2 is modified (N-acetylserine). A CAP-Gly domain is found at 27–71; it reads GVVPPVAGPWLGVEWDNPERGKHDGSHEGTVYFKCRHPTGGSFIR. LRR repeat units follow at residues 154-175, 180-200, 205-226, 230-252, 253-274, 278-299, and 308-329; these read NIRKVDLSKNLLSSWDEVIHIA, HLEVLNVSENKLKFPSGSVLT, VLKVLVLNQTGITWAEVLRCVA, GLEELYLESNNIFISERPTDVLQ, TVKLLDLSSNQLIDENQLYLIA, RLEQLILSDTGISSLHFPDAGI, and SLKYLVVNDNQISQWSFFNELE. An LRRCT domain is found at 342-384; the sequence is NPLTKEDKEAETARLLIIASIGQLKTLNKCEILPEERRRAELD. Residue lysine 463 is modified to N6-acetyllysine. Serine 495 is modified (phosphoserine).

It belongs to the TBCE family. Supercomplex made of cofactors A to E. Cofactors A and D function by capturing and stabilizing tubulin in a quasi-native conformation. Cofactor E binds to the cofactor D-tubulin complex; interaction with cofactor C then causes the release of tubulin polypeptides that are committed to the native state. Cofactors B and E can form a heterodimer which binds to alpha-tubulin and enhances their ability to dissociate tubulin heterodimers. Interacts with TBCD.

The protein localises to the cytoplasm. It localises to the cytoskeleton. In terms of biological role, tubulin-folding protein; involved in the second step of the tubulin folding pathway and in the regulation of tubulin heterodimer dissociation. Required for correct organization of microtubule cytoskeleton and mitotic splindle, and maintenance of the neuronal microtubule network. This is Tubulin-specific chaperone E (TBCE) from Homo sapiens (Human).